The sequence spans 95 residues: Aspartyl/glutamyl-tRNA(Asn/Gln) amidotransferase subunit C (95 aa).

The protein belongs to the GatC family. In terms of assembly, heterotrimer of A, B and C subunits.

It catalyses the reaction L-glutamyl-tRNA(Gln) + L-glutamine + ATP + H2O = L-glutaminyl-tRNA(Gln) + L-glutamate + ADP + phosphate + H(+). The enzyme catalyses L-aspartyl-tRNA(Asn) + L-glutamine + ATP + H2O = L-asparaginyl-tRNA(Asn) + L-glutamate + ADP + phosphate + 2 H(+). Functionally, allows the formation of correctly charged Asn-tRNA(Asn) or Gln-tRNA(Gln) through the transamidation of misacylated Asp-tRNA(Asn) or Glu-tRNA(Gln) in organisms which lack either or both of asparaginyl-tRNA or glutaminyl-tRNA synthetases. The reaction takes place in the presence of glutamine and ATP through an activated phospho-Asp-tRNA(Asn) or phospho-Glu-tRNA(Gln). This Chelativorans sp. (strain BNC1) protein is Aspartyl/glutamyl-tRNA(Asn/Gln) amidotransferase subunit C.